The chain runs to 829 residues: Cation/H(+) antiporter 14 (829 aa).

12 helical membrane passes run 48 to 68, 77 to 97, 117 to 137, 145 to 165, 180 to 200, 215 to 235, 240 to 260, 281 to 301, 329 to 349, 361 to 383, 392 to 412, and 425 to 445; these read YAMP…RLLY, GMIS…FGQS, SNLG…ASII, ILIG…TVLF, ISTV…TVLA, NCSI…RMFL, LASV…FFVC, IPFF…EVLG, LEMF…GLQT, IIEA…ASAY, FSLA…CVMW, and LLII…VCLY. Serine 827 is subject to Phosphoserine.

Belongs to the monovalent cation:proton antiporter 2 (CPA2) transporter (TC 2.A.37) family. CHX (TC 2.A.37.4) subfamily. Preferentially expressed in pollen but also detected in vegetative tissues like leaf trichomes and root vascular tissues.

The protein resides in the membrane. Its function is as follows. May operate as a cation/H(+) antiporter. The polypeptide is Cation/H(+) antiporter 14 (CHX14) (Arabidopsis thaliana (Mouse-ear cress)).